Reading from the N-terminus, the 125-residue chain is Small ribosomal subunit protein uS11 (125 aa).

Belongs to the universal ribosomal protein uS11 family. As to quaternary structure, part of the 30S ribosomal subunit. Interacts with proteins S7 and S18. Binds to IF-3.

Functionally, located on the platform of the 30S subunit, it bridges several disparate RNA helices of the 16S rRNA. Forms part of the Shine-Dalgarno cleft in the 70S ribosome. The polypeptide is Small ribosomal subunit protein uS11 (Coprothermobacter proteolyticus (strain ATCC 35245 / DSM 5265 / OCM 4 / BT)).